Reading from the N-terminus, the 570-residue chain is Urease subunit alpha (570 aa).

Residues 131 to 570 (GGMDSHIHFI…LPMAQRYFLF (440 aa)) form the Urease domain. Residues His-136, His-138, and Lys-219 each coordinate Ni(2+). Lys-219 carries the post-translational modification N6-carboxylysine. His-221 contributes to the substrate binding site. Ni(2+)-binding residues include His-248 and His-274. Catalysis depends on His-322, which acts as the Proton donor. Position 362 (Asp-362) interacts with Ni(2+).

The protein belongs to the metallo-dependent hydrolases superfamily. Urease alpha subunit family. In terms of assembly, heterotrimer of UreA (gamma), UreB (beta) and UreC (alpha) subunits. Three heterotrimers associate to form the active enzyme. Requires Ni cation as cofactor. Carboxylation allows a single lysine to coordinate two nickel ions.

The protein localises to the cytoplasm. It carries out the reaction urea + 2 H2O + H(+) = hydrogencarbonate + 2 NH4(+). The protein operates within nitrogen metabolism; urea degradation; CO(2) and NH(3) from urea (urease route): step 1/1. The chain is Urease subunit alpha from Rhizobium johnstonii (strain DSM 114642 / LMG 32736 / 3841) (Rhizobium leguminosarum bv. viciae).